Reading from the N-terminus, the 252-residue chain is 2-succinyl-6-hydroxy-2,4-cyclohexadiene-1-carboxylate synthase (252 aa).

The protein belongs to the AB hydrolase superfamily. MenH family. As to quaternary structure, monomer.

The enzyme catalyses 5-enolpyruvoyl-6-hydroxy-2-succinyl-cyclohex-3-ene-1-carboxylate = (1R,6R)-6-hydroxy-2-succinyl-cyclohexa-2,4-diene-1-carboxylate + pyruvate. It functions in the pathway quinol/quinone metabolism; 1,4-dihydroxy-2-naphthoate biosynthesis; 1,4-dihydroxy-2-naphthoate from chorismate: step 3/7. It participates in quinol/quinone metabolism; menaquinone biosynthesis. Catalyzes a proton abstraction reaction that results in 2,5-elimination of pyruvate from 2-succinyl-5-enolpyruvyl-6-hydroxy-3-cyclohexene-1-carboxylate (SEPHCHC) and the formation of 2-succinyl-6-hydroxy-2,4-cyclohexadiene-1-carboxylate (SHCHC). The sequence is that of 2-succinyl-6-hydroxy-2,4-cyclohexadiene-1-carboxylate synthase from Escherichia coli O17:K52:H18 (strain UMN026 / ExPEC).